Consider the following 1137-residue polypeptide: Protein sel-1 homolog 3 (1137 aa).

A disordered region spans residues 1–42 (MQWRGAGLWWPRRRQQQQQQQPPPPAFGPPAAAMVPPSRGVS). Residues Asn-206 and Asn-387 are each glycosylated (N-linked (GlcNAc...) asparagine). Sel1-like repeat units lie at residues 575-609 (HKAS…GQGS), 611-647 (RLSS…TKTP), 694-730 (AAAQ…LETE), 732-767 (PALI…SKGL), 768-800 (HQAV…EMGN), 801-839 (PDAS…QGGH), and 840-877 (IEGT…EKNG). Ser-613 carries the post-translational modification Phosphoserine. The N-linked (GlcNAc...) asparagine glycan is linked to Asn-942. Residues 952–988 (SFAYLKMGDLYYYGHQNQSQDLELSVQMYAQAALDGD) form a Sel1-like 8 repeat. Residues 1067-1087 (LIYFLGTFLLSVVIAWMVLYL) traverse the membrane as a helical segment. Residues 1100–1137 (AWVSADPTSSTPSPAVPPAADASDHDPPMMANGPEPRG) are disordered. Residues 1102–1120 (VSADPTSSTPSPAVPPAAD) are compositionally biased toward low complexity.

Its subcellular location is the membrane. This chain is Protein sel-1 homolog 3 (Sel1l3), found in Mus musculus (Mouse).